The sequence spans 87 residues: Small ribosomal subunit protein bS20 (87 aa).

The segment at 1–24 is disordered; the sequence is MANTAQARKRARQSVERNKHNSSL.

This sequence belongs to the bacterial ribosomal protein bS20 family.

In terms of biological role, binds directly to 16S ribosomal RNA. The protein is Small ribosomal subunit protein bS20 of Bordetella avium (strain 197N).